A 235-amino-acid chain; its full sequence is RNA polymerase sigma-E factor (235 aa).

The short motif at 82 to 95 (DLISVGTIGLIKAV) is the Polymerase core binding element. The H-T-H motif DNA-binding region spans 202 to 221 (QKEVADMLGISQSYISRLEK).

It belongs to the sigma-70 factor family.

In terms of biological role, sigma factors are initiation factors that promote the attachment of RNA polymerase to specific initiation sites and are then released. This sigma factor is responsible for the expression of sporulation specific genes. This Clostridium acetobutylicum (strain ATCC 824 / DSM 792 / JCM 1419 / IAM 19013 / LMG 5710 / NBRC 13948 / NRRL B-527 / VKM B-1787 / 2291 / W) protein is RNA polymerase sigma-E factor (sigE).